The primary structure comprises 144 residues: C-type isolectin Sp-CL4 (144 aa).

The C-type lectin domain occupies 27–144 (DENRKVKYFE…CSEKLPFMCA (118 aa)). 2 disulfide bridges follow: Cys-48-Cys-143 and Cys-119-Cys-135.

It belongs to the true venom lectin family. Post-translationally, glycosylated with a carbohydrate of 383 Da. Expressed by the venom gland.

The protein resides in the secreted. Functionally, the role of this hemagglutinin in the venom is unknown, because it is masked by the high venom hemolytic activity. Lectin with specificity to galactose. Induces hemagglutination. The chain is C-type isolectin Sp-CL4 from Scorpaena plumieri (Spotted scorpionfish).